A 479-amino-acid polypeptide reads, in one-letter code: 5-hydroxytryptamine receptor 2B (479 aa).

Over 1-55 the chain is Extracellular; that stretch reads MASSYKMSEQSTTSEHILQKTCDHLILTNRSGLETDSVAEEMKQTVEGQGHTVHW. A glycan (N-linked (GlcNAc...) asparagine) is linked at Asn29. Residues 56-78 form a helical membrane-spanning segment; sequence AALLILAVIIPTIGGNILVILAV. Residues 79–89 are Cytoplasmic-facing; it reads ALEKRLQYATN. A helical transmembrane segment spans residues 90-112; the sequence is YFLMSLAIADLLVGLFVMPIALL. Residues 113 to 128 are Extracellular-facing; the sequence is TIMFEAIWPLPLALCP. Cys127 and Cys206 are disulfide-bonded. The chain crosses the membrane as a helical span at residues 129–150; that stretch reads AWLFLDVLFSTASIMHLCAISL. Ergotamine-binding residues include Asp134 and Thr139. The DRY motif; important for ligand-induced conformation changes motif lies at 151 to 153; it reads DRY. Residues 151 to 170 lie on the Cytoplasmic side of the membrane; sequence DRYIAIKKPIQANQCNSRAT. The helical transmembrane segment at 171–191 threads the bilayer; that stretch reads AFIKITVVWLISIGIAIPVPI. Over 192–215 the chain is Extracellular; the sequence is KGIETDVINPHNVTCELTKDRFGS. Position 208 (Leu208) interacts with ergotamine. The [DE]RFG motif; may stabilize a conformation that preferentially activates signaling via beta-arrestin family members signature appears at 211–214; the sequence is DRFG. Residues 216-238 form a helical membrane-spanning segment; it reads FMVFGSLAAFFAPLTIMVVTYFL. The Cytoplasmic segment spans residues 239–323; the sequence is TIHTLQKKAY…TISNEQRASK (85 aa). The helical transmembrane segment at 324–344 threads the bilayer; that stretch reads ALGVVFFLFLLMWCPFFITNL. Over 345–359 the chain is Extracellular; that stretch reads TLALCDSCNQTTLKT. Cys349 and Cys352 are joined by a disulfide. A helical membrane pass occupies residues 360 to 381; the sequence is LLEIFVWIGYVSSGVNPLIYTL. The short motif at 375–379 is the NPxxY motif; important for ligand-induced conformation changes and signaling element; that stretch reads NPLIY. The Cytoplasmic portion of the chain corresponds to 382–479; that stretch reads FNKTFREAFG…DKAEEQVSYI (98 aa). A lipid anchor (S-palmitoyl cysteine) is attached at Cys396. Positions 477–479 match the PDZ-binding motif; it reads SYI.

This sequence belongs to the G-protein coupled receptor 1 family. Interacts (via C-terminus) with MPDZ. As to expression, ubiquitous. Detected in intestine, heart, skeletal muscle, testis, urinary bladder, stomach, liver, lung, brain and kidney. Detected in osteoblasts. Detected in the raphe nucleus in the brain, in dorsal root ganglion neurons, the brain stem, cerebellum and spinal cord. Detected in interstitial cells of Cajal in the small intestine.

Its subcellular location is the cell membrane. The protein resides in the synapse. The protein localises to the synaptosome. In terms of biological role, G-protein coupled receptor for 5-hydroxytryptamine (serotonin). Also functions as a receptor for various ergot alkaloid derivatives and psychoactive substances. Ligand binding causes a conformation change that triggers signaling via guanine nucleotide-binding proteins (G proteins) and modulates the activity of downstream effectors. HTR2B is coupled to G(q)/G(11) G alpha proteins and activates phospholipase C-beta, releasing diacylglycerol (DAG) and inositol 1,4,5-trisphosphate (IP3) second messengers that modulate the activity of phosphatidylinositol 3-kinase and promote the release of Ca(2+) ions from intracellular stores, respectively. Beta-arrestin family members inhibit signaling via G proteins and mediate activation of alternative signaling pathways. Plays a role in the regulation of dopamine and 5-hydroxytryptamine release, 5-hydroxytryptamine uptake and in the regulation of extracellular dopamine and 5-hydroxytryptamine levels, and thereby affects neural activity. May play a role in the perception of pain. Plays a role in the regulation of behavior, including impulsive behavior. Required for normal proliferation of embryonic cardiac myocytes and normal heart development. Protects cardiomyocytes against apoptosis. Plays a role in the adaptation of pulmonary arteries to chronic hypoxia. Plays a role in vasoconstriction. Required for normal osteoblast function and proliferation, and for maintaining normal bone density. Required for normal proliferation of the interstitial cells of Cajal in the intestine. The sequence is that of 5-hydroxytryptamine receptor 2B (Htr2b) from Mus musculus (Mouse).